A 255-amino-acid polypeptide reads, in one-letter code: Pimeloyl-[acyl-carrier protein] methyl ester esterase (255 aa).

Substrate contacts are provided by residues Trp18, 78–79 (SL), and 139–143 (FLALD). Ser78 acts as the Nucleophile in catalysis. Active-site residues include Asp203 and His233. His233 serves as a coordination point for substrate.

Belongs to the AB hydrolase superfamily. Carboxylesterase BioH family. As to quaternary structure, monomer.

It localises to the cytoplasm. It catalyses the reaction 6-carboxyhexanoyl-[ACP] methyl ester + H2O = 6-carboxyhexanoyl-[ACP] + methanol + H(+). It functions in the pathway cofactor biosynthesis; biotin biosynthesis. Its function is as follows. The physiological role of BioH is to remove the methyl group introduced by BioC when the pimeloyl moiety is complete. It allows to synthesize pimeloyl-ACP via the fatty acid synthetic pathway through the hydrolysis of the ester bonds of pimeloyl-ACP esters. This is Pimeloyl-[acyl-carrier protein] methyl ester esterase from Xylella fastidiosa (strain M12).